Here is a 206-residue protein sequence, read N- to C-terminus: High frequency lysogenization protein HflD homolog (206 aa).

It belongs to the HflD family.

The protein resides in the cytoplasm. It localises to the cell inner membrane. The chain is High frequency lysogenization protein HflD homolog from Pseudomonas aeruginosa (strain LESB58).